The sequence spans 415 residues: Serine hydroxymethyltransferase (415 aa).

(6S)-5,6,7,8-tetrahydrofolate contacts are provided by residues leucine 120 and 124 to 126; that span reads GHL. Lysine 229 is modified (N6-(pyridoxal phosphate)lysine).

This sequence belongs to the SHMT family. In terms of assembly, homodimer. Pyridoxal 5'-phosphate serves as cofactor.

The protein localises to the cytoplasm. It catalyses the reaction (6R)-5,10-methylene-5,6,7,8-tetrahydrofolate + glycine + H2O = (6S)-5,6,7,8-tetrahydrofolate + L-serine. It participates in one-carbon metabolism; tetrahydrofolate interconversion. The protein operates within amino-acid biosynthesis; glycine biosynthesis; glycine from L-serine: step 1/1. Functionally, catalyzes the reversible interconversion of serine and glycine with tetrahydrofolate (THF) serving as the one-carbon carrier. This reaction serves as the major source of one-carbon groups required for the biosynthesis of purines, thymidylate, methionine, and other important biomolecules. Also exhibits THF-independent aldolase activity toward beta-hydroxyamino acids, producing glycine and aldehydes, via a retro-aldol mechanism. This chain is Serine hydroxymethyltransferase, found in Pelotomaculum thermopropionicum (strain DSM 13744 / JCM 10971 / SI).